Here is a 116-residue protein sequence, read N- to C-terminus: Iron-sulfur cluster insertion protein ErpA (116 aa).

Cys44, Cys108, and Cys110 together coordinate iron-sulfur cluster.

Belongs to the HesB/IscA family. In terms of assembly, homodimer. The cofactor is iron-sulfur cluster.

Functionally, required for insertion of 4Fe-4S clusters for at least IspG. This Pseudomonas putida (strain ATCC 47054 / DSM 6125 / CFBP 8728 / NCIMB 11950 / KT2440) protein is Iron-sulfur cluster insertion protein ErpA.